Here is a 420-residue protein sequence, read N- to C-terminus: Membrane protein UL43 homolog (420 aa).

The next 11 membrane-spanning stretches (helical) occupy residues 58–78 (IFSIAAHLAITLSCITLIQFI), 81–101 (KIIYINCTIYAITGFLIAFIV), 114–134 (IGKPAQFIFALISSIADTLIT), 157–177 (LMCFVMLGAFIASYHYVCLAT), 181–201 (LTWKAGFLILTAGTIIGISAP), 203–223 (GNISSLFGFLFLYTILAINVV), 278–298 (QIPMVVMSHATGVLIPVVIAL), 312–332 (TDMLQGVCGVLVGASVSIFIP), 343–363 (IIILLSIIGAMAITLAGFGLV), 364–384 (LGPTLFSACAAALSCYTCINI), and 399–419 (VVKSILGFIITSLLVCILVAL).

This sequence belongs to the alphaherpesvirinae HHV-1 UL43 family.

It localises to the host membrane. In Gallus gallus (Chicken), this protein is Membrane protein UL43 homolog (MDV056).